The chain runs to 157 residues: Small ribosomal subunit protein uS7 (157 aa).

The protein belongs to the universal ribosomal protein uS7 family. As to quaternary structure, part of the 30S ribosomal subunit. Contacts proteins S9 and S11.

In terms of biological role, one of the primary rRNA binding proteins, it binds directly to 16S rRNA where it nucleates assembly of the head domain of the 30S subunit. Is located at the subunit interface close to the decoding center, probably blocks exit of the E-site tRNA. The sequence is that of Small ribosomal subunit protein uS7 from Bdellovibrio bacteriovorus (strain ATCC 15356 / DSM 50701 / NCIMB 9529 / HD100).